Here is a 379-residue protein sequence, read N- to C-terminus: V-type proton ATPase subunit S1 (379 aa).

An N-terminal signal peptide occupies residues 1–17; that stretch reads MLWKSLIALCVIGAAVA. Residues 18 to 333 lie on the Lumenal side of the membrane; it reads EQTPVFLWGA…WDCVGFVTPG (316 aa). 2 N-linked (GlcNAc...) asparagine glycosylation sites follow: Asn225 and Asn284. Cys282 and Cys326 are disulfide-bonded. A helical transmembrane segment spans residues 334–354; sequence ILMGLFVVALLLVIMFVGVCW. Residues 355–379 are Cytoplasmic-facing; that stretch reads MMDINTMDRFDDPKGKTITINAAAE.

Belongs to the vacuolar ATPase subunit S1 family. Accessory component of the multisubunit proton-transporting vacuolar (V)-ATPase protein pump. May interact with ATP6AP2.

Its subcellular location is the endoplasmic reticulum membrane. Its function is as follows. Accessory subunit of the proton-transporting vacuolar (V)-ATPase protein pump, which is required for luminal acidification of secretory vesicles. In Drosophila melanogaster (Fruit fly), this protein is V-type proton ATPase subunit S1.